The primary structure comprises 1411 residues: DNA-directed RNA polymerase subunit beta' (1411 aa).

Zn(2+)-binding residues include C69, C71, C84, and C87. Positions 461, 463, and 465 each coordinate Mg(2+). Positions 809, 883, 890, and 893 each coordinate Zn(2+).

The protein belongs to the RNA polymerase beta' chain family. In terms of assembly, the RNAP catalytic core consists of 2 alpha, 1 beta, 1 beta' and 1 omega subunit. When a sigma factor is associated with the core the holoenzyme is formed, which can initiate transcription. The cofactor is Mg(2+). Zn(2+) serves as cofactor.

It catalyses the reaction RNA(n) + a ribonucleoside 5'-triphosphate = RNA(n+1) + diphosphate. In terms of biological role, DNA-dependent RNA polymerase catalyzes the transcription of DNA into RNA using the four ribonucleoside triphosphates as substrates. This is DNA-directed RNA polymerase subunit beta' from Ehrlichia ruminantium (strain Gardel).